Consider the following 502-residue polypeptide: MKISPSEITKIIEEQLKRSDREIDYFEAGRIIQVGDGIARAYGLKGVMSNELVQFENGEYGLALNLEEDNVGIVVLGDYREIKEGDLVKRTGRIIEVPAGEALLGRVVNPLGIPLDGKGPIEASEHRPVEIKAPGVVMRKPVDTPLQTGIKAIDAMIPIGRGQRELIIGDRQTGKTAIAIDTIINQKDQGVYCIYVAIGQKTAVLARIIDKLEETGAMEYTTIVAATANDPATLAYLAPYAGAAMGEYFMYSGKDALVIYDDLSKHAAAYRELSLLLRRPPGREAYPGDVFYLHSRLLERAARLNEEHGGGSLTALPIIETLANDVSAYIPTNVISITDGQIYLDPNLFYAGNRPAINVGLSVSRVGGSAQIKAMKKIAGSLRLDLAQYRELLAFAQFSTELDKATQAQLIRGEKLTELLKQEQYSPMPVEEQIAVLYAGTRGYLDDLPTDKIRQFEKQLLQTMRQKYADVLKAIREKKDMTEEIEAGLKKAVEDVRQAFVS.

An ATP-binding site is contributed by Gly169–Thr176.

It belongs to the ATPase alpha/beta chains family. As to quaternary structure, F-type ATPases have 2 components, CF(1) - the catalytic core - and CF(0) - the membrane proton channel. CF(1) has five subunits: alpha(3), beta(3), gamma(1), delta(1), epsilon(1). CF(0) has three main subunits: a(1), b(2) and c(9-12). The alpha and beta chains form an alternating ring which encloses part of the gamma chain. CF(1) is attached to CF(0) by a central stalk formed by the gamma and epsilon chains, while a peripheral stalk is formed by the delta and b chains.

It is found in the cell inner membrane. It carries out the reaction ATP + H2O + 4 H(+)(in) = ADP + phosphate + 5 H(+)(out). Produces ATP from ADP in the presence of a proton gradient across the membrane. The alpha chain is a regulatory subunit. The protein is ATP synthase subunit alpha of Kosmotoga olearia (strain ATCC BAA-1733 / DSM 21960 / TBF 19.5.1).